Consider the following 120-residue polypeptide: NAD(P)H-quinone oxidoreductase subunit 3 (120 aa).

Transmembrane regions (helical) follow at residues 1 to 21 (MFVL…SLVP), 64 to 84 (MFAL…PWAV), and 89 to 109 (LGLL…VALV).

This sequence belongs to the complex I subunit 3 family. In terms of assembly, NDH-1 can be composed of about 15 different subunits; different subcomplexes with different compositions have been identified which probably have different functions.

The protein localises to the cellular thylakoid membrane. It catalyses the reaction a plastoquinone + NADH + (n+1) H(+)(in) = a plastoquinol + NAD(+) + n H(+)(out). The catalysed reaction is a plastoquinone + NADPH + (n+1) H(+)(in) = a plastoquinol + NADP(+) + n H(+)(out). Its function is as follows. NDH-1 shuttles electrons from an unknown electron donor, via FMN and iron-sulfur (Fe-S) centers, to quinones in the respiratory and/or the photosynthetic chain. The immediate electron acceptor for the enzyme in this species is believed to be plastoquinone. Couples the redox reaction to proton translocation, and thus conserves the redox energy in a proton gradient. Cyanobacterial NDH-1 also plays a role in inorganic carbon-concentration. The sequence is that of NAD(P)H-quinone oxidoreductase subunit 3 from Trichormus variabilis (strain ATCC 29413 / PCC 7937) (Anabaena variabilis).